The chain runs to 282 residues: Transcription factor MYB1 (282 aa).

2 HTH myb-type domains span residues 9–61 and 62–116; these read KEGL…LNYL and RPDI…SKKV. 2 consecutive DNA-binding regions (H-T-H motif) follow at residues 37–61 and 89–112; these read WRDL…LNYL and WSLI…NTYL. Positions 258–282 are disordered; it reads EDDWKQNGGKDELMGGGNGGPSSVS. A compositionally biased stretch (basic and acidic residues) spans 260–270; sequence DWKQNGGKDEL. Gly residues predominate over residues 271-282; it reads MGGGNGGPSSVS.

The protein resides in the nucleus. Its function is as follows. Transcription activator involved in the spatiotemporal regulation of flavonoid biosynthesis specifically in the corms of Montbretia. Activates the promoters of enzymes involved in the biosynthesis of the flavonol kaempferol and the flavonol-glycoside kaempferol-rhamnoside. The protein is Transcription factor MYB1 of Crocosmia x crocosmiiflora (Montbretia).